A 120-amino-acid chain; its full sequence is Ribosome-binding factor A (120 aa).

This sequence belongs to the RbfA family. As to quaternary structure, monomer. Binds 30S ribosomal subunits, but not 50S ribosomal subunits or 70S ribosomes.

It is found in the cytoplasm. In terms of biological role, one of several proteins that assist in the late maturation steps of the functional core of the 30S ribosomal subunit. Associates with free 30S ribosomal subunits (but not with 30S subunits that are part of 70S ribosomes or polysomes). Required for efficient processing of 16S rRNA. May interact with the 5'-terminal helix region of 16S rRNA. The protein is Ribosome-binding factor A of Lactobacillus delbrueckii subsp. bulgaricus (strain ATCC 11842 / DSM 20081 / BCRC 10696 / JCM 1002 / NBRC 13953 / NCIMB 11778 / NCTC 12712 / WDCM 00102 / Lb 14).